Here is a 603-residue protein sequence, read N- to C-terminus: DNA mismatch repair protein MutL (603 aa).

Belongs to the DNA mismatch repair MutL/HexB family.

Functionally, this protein is involved in the repair of mismatches in DNA. It is required for dam-dependent methyl-directed DNA mismatch repair. May act as a 'molecular matchmaker', a protein that promotes the formation of a stable complex between two or more DNA-binding proteins in an ATP-dependent manner without itself being part of a final effector complex. The sequence is that of DNA mismatch repair protein MutL from Rhodopseudomonas palustris (strain BisA53).